Consider the following 124-residue polypeptide: Small ribosomal subunit protein uS12 (124 aa).

Positions 1–20 (MPTIQQLVRKGRTPKVVKTK) are disordered. Basic residues predominate over residues 9–18 (RKGRTPKVVK). 3-methylthioaspartic acid is present on Asp89.

Belongs to the universal ribosomal protein uS12 family. In terms of assembly, part of the 30S ribosomal subunit. Contacts proteins S8 and S17. May interact with IF1 in the 30S initiation complex.

In terms of biological role, with S4 and S5 plays an important role in translational accuracy. Functionally, interacts with and stabilizes bases of the 16S rRNA that are involved in tRNA selection in the A site and with the mRNA backbone. Located at the interface of the 30S and 50S subunits, it traverses the body of the 30S subunit contacting proteins on the other side and probably holding the rRNA structure together. The combined cluster of proteins S8, S12 and S17 appears to hold together the shoulder and platform of the 30S subunit. This Clavibacter michiganensis subsp. michiganensis (strain NCPPB 382) protein is Small ribosomal subunit protein uS12.